The following is a 290-amino-acid chain: Acetyl-coenzyme A carboxylase carboxyl transferase subunit beta (290 aa).

In terms of domain architecture, CoA carboxyltransferase N-terminal spans 28 to 290; that stretch reads LMNKCSKCGT…TVREGLSHGG (263 aa). 4 residues coordinate Zn(2+): cysteine 32, cysteine 35, cysteine 51, and cysteine 54. The C4-type zinc-finger motif lies at 32-54; the sequence is CSKCGTIQYSKELDKNLKVCSSC.

The protein belongs to the AccD/PCCB family. As to quaternary structure, acetyl-CoA carboxylase is a heterohexamer composed of biotin carboxyl carrier protein (AccB), biotin carboxylase (AccC) and two subunits each of ACCase subunit alpha (AccA) and ACCase subunit beta (AccD). It depends on Zn(2+) as a cofactor.

It localises to the cytoplasm. The enzyme catalyses N(6)-carboxybiotinyl-L-lysyl-[protein] + acetyl-CoA = N(6)-biotinyl-L-lysyl-[protein] + malonyl-CoA. It functions in the pathway lipid metabolism; malonyl-CoA biosynthesis; malonyl-CoA from acetyl-CoA: step 1/1. In terms of biological role, component of the acetyl coenzyme A carboxylase (ACC) complex. Biotin carboxylase (BC) catalyzes the carboxylation of biotin on its carrier protein (BCCP) and then the CO(2) group is transferred by the transcarboxylase to acetyl-CoA to form malonyl-CoA. The protein is Acetyl-coenzyme A carboxylase carboxyl transferase subunit beta of Paenibacillus sp. (strain JDR-2).